We begin with the raw amino-acid sequence, 147 residues long: Hemoglobin subunit delta (147 aa).

Residues 3–147 enclose the Globin domain; that stretch reads HLTPEEKALV…VANALAHKYH (145 aa). At serine 51 the chain carries Phosphoserine. Residues histidine 64 and histidine 93 each contribute to the heme b site.

It belongs to the globin family. As to quaternary structure, heterotetramer of two delta chains and two alpha chains. As to expression, red blood cells.

This chain is Hemoglobin subunit delta (HBD), found in Trichechus manatus (Caribbean manatee).